The primary structure comprises 82 residues: ATP synthase subunit c, chloroplastic (82 aa).

The next 2 membrane-spanning stretches (helical) occupy residues 4-24 (IISA…AIGP) and 57-77 (LAFM…LLFA).

It belongs to the ATPase C chain family. In terms of assembly, F-type ATPases have 2 components, F(1) - the catalytic core - and F(0) - the membrane proton channel. F(1) has five subunits: alpha(3), beta(3), gamma(1), delta(1), epsilon(1). F(0) has four main subunits: a(1), b(1), b'(1) and c(10-14). The alpha and beta chains form an alternating ring which encloses part of the gamma chain. F(1) is attached to F(0) by a central stalk formed by the gamma and epsilon chains, while a peripheral stalk is formed by the delta, b and b' chains.

Its subcellular location is the plastid. The protein localises to the chloroplast thylakoid membrane. Functionally, f(1)F(0) ATP synthase produces ATP from ADP in the presence of a proton or sodium gradient. F-type ATPases consist of two structural domains, F(1) containing the extramembraneous catalytic core and F(0) containing the membrane proton channel, linked together by a central stalk and a peripheral stalk. During catalysis, ATP synthesis in the catalytic domain of F(1) is coupled via a rotary mechanism of the central stalk subunits to proton translocation. Its function is as follows. Key component of the F(0) channel; it plays a direct role in translocation across the membrane. A homomeric c-ring of between 10-14 subunits forms the central stalk rotor element with the F(1) delta and epsilon subunits. The sequence is that of ATP synthase subunit c, chloroplastic from Heterosigma akashiwo (strain NIES-293 / 8280G21-1).